We begin with the raw amino-acid sequence, 534 residues long: Phosphoenolpyruvate carboxykinase (ATP) (534 aa).

Residues Arg-59, Tyr-200, and Lys-206 each contribute to the substrate site. ATP is bound by residues Lys-206, His-225, and 242–250; that span reads GLSGTGKTT. Positions 206 and 225 each coordinate Mn(2+). A Mn(2+)-binding site is contributed by Asp-263. Residues Glu-291, Arg-327, 443–444, and Thr-449 contribute to the ATP site; that span reads RI. Arg-327 lines the substrate pocket.

Belongs to the phosphoenolpyruvate carboxykinase (ATP) family. Mn(2+) is required as a cofactor.

The protein localises to the cytoplasm. It carries out the reaction oxaloacetate + ATP = phosphoenolpyruvate + ADP + CO2. Its pathway is carbohydrate biosynthesis; gluconeogenesis. Functionally, involved in the gluconeogenesis. Catalyzes the conversion of oxaloacetate (OAA) to phosphoenolpyruvate (PEP) through direct phosphoryl transfer between the nucleoside triphosphate and OAA. The protein is Phosphoenolpyruvate carboxykinase (ATP) of Lachnospira eligens (strain ATCC 27750 / DSM 3376 / VPI C15-48 / C15-B4) (Eubacterium eligens).